The chain runs to 367 residues: Nodulation protein 10 (367 aa).

The next 11 helical transmembrane spans lie at 15–37 (FDLLRLFAACQVMFSHAWNWLHL), 46–66 (VFDLLFSAPGVAIFFLISGFL), 88–108 (IFPALFVNIAVMELALLVTGG), 109–129 (LNVTGILQYLFYFTVYILTAA), 155–175 (VLWTLTVELTFYLTLPMLLEI), 183–203 (GALVVAVAALGSWVMAQHFNI), 208–228 (NPFLSVTAGPTFWIFSMGVLA), 245–265 (WWLATHLAITWWVAGTSAAFI), 270–290 (AAPVDAFRIAVLAGLVLSAAH), 312–332 (MLVMHTLIAIGWVGHWWLWIV), and 335–355 (VGTVALAALSWALIEQPAMKL).

The protein belongs to the acyltransferase 3 family.

It localises to the cell membrane. Its function is as follows. Not known. NodX allows Rhizobium leguminosarum biovar viciae strain TOM to nodulate Afghanistan peas. This Rhizobium leguminosarum bv. viciae protein is Nodulation protein 10 (nodX).